The chain runs to 310 residues: uncharacterized protein (310 aa).

A run of 5 helical transmembrane segments spans residues 10–30 (AVLS…AYAI), 44–64 (TVNL…ATPA), 78–98 (FSSG…GYSA), 113–133 (LGIA…WILW), and 161–181 (VVVA…PLIA). Basic and acidic residues predominate over residues 285-297 (PLEDPKSWQHPDE). Residues 285-310 (PLEDPKSWQHPDEFPPSAPLNRDKPN) form a disordered region.

Belongs to the cation diffusion facilitator (CDF) transporter (TC 2.A.4) family.

Its subcellular location is the cell membrane. This is an uncharacterized protein from Synechocystis sp. (strain ATCC 27184 / PCC 6803 / Kazusa).